The chain runs to 71 residues: Small ribosomal subunit protein bS21 (71 aa).

This sequence belongs to the bacterial ribosomal protein bS21 family.

The sequence is that of Small ribosomal subunit protein bS21 from Nitrosococcus oceani (strain ATCC 19707 / BCRC 17464 / JCM 30415 / NCIMB 11848 / C-107).